The following is a 62-amino-acid chain: Mastoparan-AF (62 aa).

The first 25 residues, 1–25, serve as a signal peptide directing secretion; the sequence is MKNTILILFTAFIALLGFFGMSAEA. 4 AXPX repeats span residues 25–28, 29–32, 33–36, and 43–46; these read ADPI and ADPE. A propeptide spanning residues 26 to 47 is cleaved from the precursor; it reads DPIADPIADPISGPNAEADPEA. A Phenylalanine amide modification is found at Phe-61.

The protein belongs to the MCD family. Mastoparan subfamily. Expressed by the venom gland.

Its subcellular location is the secreted. It localises to the target cell membrane. Functionally, antimicrobial and mast cell degranulating peptide. Has broad spectrum antibacterial activity against both Gram-positive and Gram-negative bacteria (S.aureus MIC=16-32 ug/ml, S.xylosus MIC=1.5 ug/ml, S.alactolyticus MIC=8 ug/ml, C.koseri MIC=4 ug/ml, E.coli MIC=4-32 ug/ml, K.pneumoniae MIC=32 ug/ml, P.aerugiosa MIC=96 ug/ml, S.choleraesuis MIC=16 ug/ml, S.typhimurium MIC=32 ug/ml, V.parahamelytics MIC=16 ug/ml). Is also active on multi-antibiotic resistant hemolytic E.coli O157:H7. Acts by affecting membrane permeability. On E.coli O157:H7, acts through multiple membrane disruption patterns, including large perforations (full opening) at apical ends (hollow tubes), vesicle budding, forming dents, and membrane corrugation and invagination leading to irregular pits or pores. Exerts 40% lower membrane permeabilization activities on E.coli O157:H7 than on the non-pathogen E.coli BL21. Shows little hemolytic activities on sheep, chicken and human erythrocytes, but with a higher activity on chicken erythrocytes. Its mast cell degranulation activity may be related to the activation of G-protein coupled receptors in mast cells as well as interaction with other proteins located in cell endosomal membranes in the mast cells. This is Mastoparan-AF from Vespa affinis (Lesser banded hornet).